A 401-amino-acid chain; its full sequence is Argininosuccinate synthase (401 aa).

ATP is bound at residue 8–16 (AYSGGLDTS). Residue Tyr-85 coordinates L-citrulline. Position 115 (Gly-115) interacts with ATP. Residues Thr-117, Asn-121, and Asp-122 each coordinate L-aspartate. Residue Asn-121 coordinates L-citrulline. Residues Arg-125, Ser-173, Glu-258, and Tyr-270 each contribute to the L-citrulline site.

The protein belongs to the argininosuccinate synthase family. Type 1 subfamily. In terms of assembly, homotetramer.

It is found in the cytoplasm. The catalysed reaction is L-citrulline + L-aspartate + ATP = 2-(N(omega)-L-arginino)succinate + AMP + diphosphate + H(+). It participates in amino-acid biosynthesis; L-arginine biosynthesis; L-arginine from L-ornithine and carbamoyl phosphate: step 2/3. This chain is Argininosuccinate synthase, found in Staphylococcus aureus (strain MRSA252).